A 1579-amino-acid chain; its full sequence is tRNA (guanosine(18)-2'-O)-methyltransferase TARBP1 (1579 aa).

Position 1 is an N-acetylmethionine (Met-1). Val-1501, Gly-1524, Ile-1544, Gln-1546, and Leu-1553 together coordinate S-adenosyl-L-homocysteine.

The protein belongs to the class IV-like SAM-binding methyltransferase superfamily. RNA methyltransferase TrmH family. In terms of assembly, monomer and homodimer.

The enzyme catalyses guanosine(18) in tRNA + S-adenosyl-L-methionine = 2'-O-methylguanosine(18) in tRNA + S-adenosyl-L-homocysteine + H(+). In terms of biological role, S-adenosyl-L-methionine-dependent 2'-O-ribose methyltransferase that catalyzes the formation of 2'-O-methylguanosine at position 18 (Gm18) in a subset of tRNA. Selectively mediates Gm18 methylation of tRNAGln-TTG/CTG and tRNASer-TGA/GCT. Gm18 modification can enhance the stability of modified tRNAs. This chain is tRNA (guanosine(18)-2'-O)-methyltransferase TARBP1, found in Mus musculus (Mouse).